The following is a 411-amino-acid chain: Tubulin beta-2 chain (411 aa).

GTP-binding residues include E37, S106, G110, T111, G112, N172, and N194. E37 provides a ligand contact to Mg(2+). Positions 392–411 (QYQDATAEPEGXYEEDYDEA) are disordered. The span at 402–411 (GXYEEDYDEA) shows a compositional bias: acidic residues.

The protein belongs to the tubulin family. As to quaternary structure, dimer of alpha and beta chains. A typical microtubule is a hollow water-filled tube with an outer diameter of 25 nm and an inner diameter of 15 nM. Alpha-beta heterodimers associate head-to-tail to form protofilaments running lengthwise along the microtubule wall with the beta-tubulin subunit facing the microtubule plus end conferring a structural polarity. Microtubules usually have 13 protofilaments but different protofilament numbers can be found in some organisms and specialized cells. Mg(2+) serves as cofactor.

It localises to the cytoplasm. The protein localises to the cytoskeleton. Functionally, tubulin is the major constituent of microtubules, a cylinder consisting of laterally associated linear protofilaments composed of alpha- and beta-tubulin heterodimers. Microtubules grow by the addition of GTP-tubulin dimers to the microtubule end, where a stabilizing cap forms. Below the cap, tubulin dimers are in GDP-bound state, owing to GTPase activity of alpha-tubulin. This chain is Tubulin beta-2 chain (TUBB2), found in Anemia phyllitidis (Fern).